The sequence spans 367 residues: Glycolate oxidase 3 (367 aa).

The 360-residue stretch at Met1–Asp360 folds into the FMN hydroxy acid dehydrogenase domain. Tyr25 lines the glyoxylate pocket. FMN-binding positions include Pro78–Ala80, Ser107, Gln128–Tyr130, and Thr156. Residue Tyr130 participates in glyoxylate binding. Glyoxylate is bound at residue Arg165. FMN-binding residues include Lys231 and Ser253. Glyoxylate is bound by residues His255 and Arg258. His255 functions as the Proton acceptor in the catalytic mechanism. FMN contacts are provided by residues Asp286–Arg290 and Gly309–Arg310. The short motif at Ser365–Leu367 is the Microbody targeting signal element.

The protein belongs to the FMN-dependent alpha-hydroxy acid dehydrogenase family. As to quaternary structure, homotetramer. The cofactor is FMN.

Its subcellular location is the peroxisome. It catalyses the reaction glycolate + O2 = glyoxylate + H2O2. It functions in the pathway photosynthesis; photorespiration; glycine from 2-phosphoglycolate: step 2/3. Its function is as follows. Catalyzes the oxidation of glycolate to glyoxylate, with a reduction of O2 to H2O2. Is a key enzyme in photorespiration in green plants. This is Glycolate oxidase 3 (GLO3) from Oryza sativa subsp. indica (Rice).